We begin with the raw amino-acid sequence, 378 residues long: Dual-specificity RNA methyltransferase RlmN (378 aa).

Catalysis depends on Glu-96, which acts as the Proton acceptor. The Radical SAM core domain occupies 102 to 340; sequence DNGRGTLCVS…ATVRTTRGDD (239 aa). A disulfide bridge links Cys-109 with Cys-345. [4Fe-4S] cluster contacts are provided by Cys-116, Cys-120, and Cys-123. Residues 170–171, Ser-202, 224–226, and Asn-302 each bind S-adenosyl-L-methionine; these read GE and SLH. The active-site S-methylcysteine intermediate is Cys-345.

Belongs to the radical SAM superfamily. RlmN family. [4Fe-4S] cluster is required as a cofactor.

The protein localises to the cytoplasm. It catalyses the reaction adenosine(2503) in 23S rRNA + 2 reduced [2Fe-2S]-[ferredoxin] + 2 S-adenosyl-L-methionine = 2-methyladenosine(2503) in 23S rRNA + 5'-deoxyadenosine + L-methionine + 2 oxidized [2Fe-2S]-[ferredoxin] + S-adenosyl-L-homocysteine. It carries out the reaction adenosine(37) in tRNA + 2 reduced [2Fe-2S]-[ferredoxin] + 2 S-adenosyl-L-methionine = 2-methyladenosine(37) in tRNA + 5'-deoxyadenosine + L-methionine + 2 oxidized [2Fe-2S]-[ferredoxin] + S-adenosyl-L-homocysteine. Functionally, specifically methylates position 2 of adenine 2503 in 23S rRNA and position 2 of adenine 37 in tRNAs. m2A2503 modification seems to play a crucial role in the proofreading step occurring at the peptidyl transferase center and thus would serve to optimize ribosomal fidelity. The protein is Dual-specificity RNA methyltransferase RlmN of Hahella chejuensis (strain KCTC 2396).